A 149-amino-acid chain; its full sequence is 3-dehydroquinate dehydratase (149 aa).

Residue Tyr-26 is the Proton acceptor of the active site. Substrate is bound by residues Asn-77, His-83, and Asp-90. The active-site Proton donor is His-103. Residues 104 to 105 (LS) and Arg-114 each bind substrate.

Belongs to the type-II 3-dehydroquinase family. Homododecamer.

It catalyses the reaction 3-dehydroquinate = 3-dehydroshikimate + H2O. It functions in the pathway metabolic intermediate biosynthesis; chorismate biosynthesis; chorismate from D-erythrose 4-phosphate and phosphoenolpyruvate: step 3/7. Catalyzes a trans-dehydration via an enolate intermediate. In Haemophilus influenzae (strain 86-028NP), this protein is 3-dehydroquinate dehydratase.